The primary structure comprises 313 residues: Glycine--tRNA ligase alpha subunit (313 aa).

This sequence belongs to the class-II aminoacyl-tRNA synthetase family. Tetramer of two alpha and two beta subunits.

Its subcellular location is the cytoplasm. It carries out the reaction tRNA(Gly) + glycine + ATP = glycyl-tRNA(Gly) + AMP + diphosphate. This chain is Glycine--tRNA ligase alpha subunit, found in Leuconostoc mesenteroides subsp. mesenteroides (strain ATCC 8293 / DSM 20343 / BCRC 11652 / CCM 1803 / JCM 6124 / NCDO 523 / NBRC 100496 / NCIMB 8023 / NCTC 12954 / NRRL B-1118 / 37Y).